A 418-amino-acid chain; its full sequence is (+)-T-muurolol synthase ((2E,6E)-farnesyl diphosphate cyclizing) (418 aa).

Residues aspartate 83 and aspartate 88 each coordinate Mg(2+). The DDXXXD motif signature appears at aspartate 83 to aspartate 88. Arginine 179 is a binding site for substrate. Positions 225 and 229 each coordinate Mg(2+). Lysine 232 serves as a coordination point for substrate. A Mg(2+)-binding site is contributed by glutamate 233. Arginine 312–tyrosine 313 serves as a coordination point for substrate. Residues leucine 354 to arginine 418 form a disordered region. The segment covering alanine 402 to threonine 412 has biased composition (polar residues).

The protein belongs to the terpene synthase family. Mg(2+) is required as a cofactor.

The catalysed reaction is (2E,6E)-farnesyl diphosphate + H2O = (+)-T-muurolol + diphosphate. It functions in the pathway secondary metabolite biosynthesis; terpenoid biosynthesis. Its function is as follows. Catalyzes the conversion of (2E,6E)-farnesyl diphosphate (FPP) into (+)-T-muurolol via a 1,10-cyclization, which requires isomerization of FPP to nerolidyl diphosphate (NPP) and then abstraction of the pyrophosphate from intermediate NPP leading to a (E,Z)-germacradienyl (helminthogermacradienyl) cation. In Streptomyces clavuligerus, this protein is (+)-T-muurolol synthase ((2E,6E)-farnesyl diphosphate cyclizing).